The chain runs to 333 residues: Anthranilate phosphoribosyltransferase (333 aa).

5-phospho-alpha-D-ribose 1-diphosphate contacts are provided by residues Gly81, Gly84–Asp85, Thr89, Asn91–Thr94, Lys109–Ser117, and Ala121. Gly81 lines the anthranilate pocket. Residue Ser93 coordinates Mg(2+). Asn112 provides a ligand contact to anthranilate. Arg167 serves as a coordination point for anthranilate. Asp225 and Glu226 together coordinate Mg(2+).

The protein belongs to the anthranilate phosphoribosyltransferase family. In terms of assembly, homodimer. Requires Mg(2+) as cofactor.

It catalyses the reaction N-(5-phospho-beta-D-ribosyl)anthranilate + diphosphate = 5-phospho-alpha-D-ribose 1-diphosphate + anthranilate. It participates in amino-acid biosynthesis; L-tryptophan biosynthesis; L-tryptophan from chorismate: step 2/5. Its function is as follows. Catalyzes the transfer of the phosphoribosyl group of 5-phosphorylribose-1-pyrophosphate (PRPP) to anthranilate to yield N-(5'-phosphoribosyl)-anthranilate (PRA). The chain is Anthranilate phosphoribosyltransferase from Haemophilus influenzae (strain PittGG).